A 1363-amino-acid chain; its full sequence is Vascular endothelial growth factor receptor 3 (1363 aa).

Residues 1–24 form the signal peptide; it reads MQRGAALCLRLWLCLGLLDGLVSG. The Extracellular portion of the chain corresponds to 25-775; it reads YSMTPPTLNI…EGSEDKGSME (751 aa). 7 Ig-like C2-type domains span residues 30 to 127, 151 to 213, 219 to 326, 331 to 415, 422 to 552, 555 to 671, and 678 to 764; these read PTLN…TAAS, KDAM…WGDQ, PFLV…TEVI, PFIS…ISLE, PQIH…FYVT, PDGF…KYLS, and PRLT…ASVA. N-linked (GlcNAc...) asparagine glycosylation is found at asparagine 33, asparagine 104, asparagine 166, asparagine 251, asparagine 299, and asparagine 411. 2 disulfides stabilise this stretch: cysteine 51–cysteine 111 and cysteine 158–cysteine 206. The cysteines at positions 252 and 310 are disulfide-linked. Intrachain disulfides connect cysteine 445–cysteine 534, cysteine 466–cysteine 486, and cysteine 578–cysteine 653. 5 N-linked (GlcNAc...) asparagine glycosylation sites follow: asparagine 515, asparagine 527, asparagine 594, asparagine 683, and asparagine 690. A disulfide bridge links cysteine 699 with cysteine 751. Residue asparagine 758 is glycosylated (N-linked (GlcNAc...) asparagine). Residues 776 to 796 traverse the membrane as a helical segment; the sequence is IVILVGTGVIAVFFWVLLLLI. Topologically, residues 797–1363 are cytoplasmic; it reads FCNMRRPAHA…RVTFFTDNSY (567 aa). 3 positions are modified to phosphotyrosine; by SRC: tyrosine 830, tyrosine 833, and tyrosine 853. The 329-residue stretch at 845–1173 folds into the Protein kinase domain; the sequence is LHLGRVLGYG…ELVEILGDLL (329 aa). Residues 851 to 859 and lysine 879 contribute to the ATP site; that span reads LGYGAFGKV. Residue aspartate 1037 is the Proton acceptor of the active site. Residue tyrosine 1063 is modified to Phosphotyrosine; by autocatalysis and SRC. 4 positions are modified to phosphotyrosine; by autocatalysis: tyrosine 1068, tyrosine 1230, tyrosine 1231, and tyrosine 1265. Residues 1291–1331 are disordered; the sequence is HRQESGFSCKGPGQNVAVTRAHPDSQGRRRRPERGARGGQV. Phosphotyrosine; by autocatalysis and SRC occurs at positions 1333 and 1337. Tyrosine 1363 carries the phosphotyrosine; by autocatalysis modification.

It belongs to the protein kinase superfamily. Tyr protein kinase family. CSF-1/PDGF receptor subfamily. In terms of assembly, interacts with VEGFC and VEGFD. Monomer in the absence of bound VEGFC or VEGFD. Homodimer in the presence of bound VEGFC or VEGFD. Can also form a heterodimer with KDR. Interacts with PTPN14; the interaction is enhanced by stimulation with VEGFC. Interacts with CRK, GRB2, PTK2/FAK1, SHC1, PIK3R1 and PTPN11/SHP-2. Identified in a complex with SRC and ITGB1. In terms of processing, autophosphorylated on tyrosine residues upon ligand binding. Autophosphorylation occurs in trans, i.e. one subunit of the dimeric receptor phosphorylates tyrosine residues on the other subunit. Phosphorylation in response to H(2)O(2) is mediated by a process that requires SRC and PRKCD activity. Phosphorylation at Tyr-1068 is required for autophosphorylation at additional tyrosine residues. Phosphorylation at Tyr-1063 and Tyr-1337 is important for interaction with CRK and subsequent activation of MAPK8. Phosphorylation at Tyr-1230, Tyr-1231 and Tyr-1337 is important for interaction with GRB2 and subsequent activation of the AKT1 and MAPK1/ERK2 and/or MAPK3/ERK1 signaling pathways. In response to endothelial cell adhesion onto collagen, can also be phosphorylated in the absence of FLT4 kinase activity by SRC at Tyr-830, Tyr-833, Tyr-853, Tyr-1063, Tyr-1333, and Tyr-1337. Detected in endothelial cells (at protein level). Widely expressed. Detected in fetal spleen, lung and brain. Detected in adult liver, muscle, thymus, placenta, lung, testis, ovary, prostate, heart, and kidney.

Its subcellular location is the cell membrane. The protein resides in the cytoplasm. The protein localises to the nucleus. It localises to the secreted. The catalysed reaction is L-tyrosyl-[protein] + ATP = O-phospho-L-tyrosyl-[protein] + ADP + H(+). With respect to regulation, present in an inactive conformation in the absence of bound ligand. Binding of VEGFC or VEGFD leads to dimerization and activation by autophosphorylation on tyrosine residues. Inhibited by MAZ51. Tyrosine-protein kinase that acts as a cell-surface receptor for VEGFC and VEGFD, and plays an essential role in adult lymphangiogenesis and in the development of the vascular network and the cardiovascular system during embryonic development. Promotes proliferation, survival and migration of endothelial cells, and regulates angiogenic sprouting. Signaling by activated FLT4 leads to enhanced production of VEGFC, and to a lesser degree VEGFA, thereby creating a positive feedback loop that enhances FLT4 signaling. Modulates KDR signaling by forming heterodimers. The secreted isoform 3 may function as a decoy receptor for VEGFC and/or VEGFD and play an important role as a negative regulator of VEGFC-mediated lymphangiogenesis and angiogenesis. Binding of vascular growth factors to isoform 1 or isoform 2 leads to the activation of several signaling cascades; isoform 2 seems to be less efficient in signal transduction, because it has a truncated C-terminus and therefore lacks several phosphorylation sites. Mediates activation of the MAPK1/ERK2, MAPK3/ERK1 signaling pathway, of MAPK8 and the JUN signaling pathway, and of the AKT1 signaling pathway. Phosphorylates SHC1. Mediates phosphorylation of PIK3R1, the regulatory subunit of phosphatidylinositol 3-kinase. Promotes phosphorylation of MAPK8 at 'Thr-183' and 'Tyr-185', and of AKT1 at 'Ser-473'. This Homo sapiens (Human) protein is Vascular endothelial growth factor receptor 3 (FLT4).